A 423-amino-acid polypeptide reads, in one-letter code: MAQAVWSRLGRILWLSCLLPWAPAGVAAGLYELNLTTDSPATTGAEVTISASLVAKDNGSLALPADAHLYRFHWIHTPLVLTGKAEKGLSSTIRVVGHVPGEFPVSVWVTASDCWMCQPVARGFVVLHITEFLVGDLVVTQNTSLPWPSSYLTKTILKVSFLLHDPSDFLKTALFLYSWDFGDGTQMVTEDSVVYYNYSIIGTFTVKLKVVAEWEEVKPDATKAVMQKTGDFSASLKLQETLRGIQVLGPTLIQTFQKMTLTLNFLGSPPLTVCWRLKPECLPLEEGECHPVSVASTAYNLTHTFRDPGDYCFSIRAENIISKTHQYHRIQVWPSRIQPAVFAFPCATLITVMLAFIMYMTLRNATQQKDMVENPEPPSGVRCCCQMCCGPFLLETPSEYLEIVRENHGLLPPLYKSVKTYTV.

A signal peptide spans 1–24 (MAQAVWSRLGRILWLSCLLPWAPA). Residues 25–339 (GVAAGLYELN…IQVWPSRIQP (315 aa)) are Extracellular-facing. Residues N34, N197, and N300 are each glycosylated (N-linked (GlcNAc...) asparagine). The PKD domain occupies 147-233 (WPSSYLTKTI…AVMQKTGDFS (87 aa)). Residues 340-360 (AVFAFPCATLITVMLAFIMYM) form a helical membrane-spanning segment. Residues 361–423 (TLRNATQQKD…LYKSVKTYTV (63 aa)) lie on the Cytoplasmic side of the membrane.

Its subcellular location is the golgi apparatus membrane. The sequence is that of Transmembrane protein 130 (TMEM130) from Pongo abelii (Sumatran orangutan).